We begin with the raw amino-acid sequence, 244 residues long: Phosphoadenosine 5'-phosphosulfate reductase (244 aa).

Cysteine 239 serves as the catalytic Nucleophile; cysteine thiosulfonate intermediate.

The protein belongs to the PAPS reductase family. CysH subfamily.

It is found in the cytoplasm. The catalysed reaction is [thioredoxin]-disulfide + sulfite + adenosine 3',5'-bisphosphate + 2 H(+) = [thioredoxin]-dithiol + 3'-phosphoadenylyl sulfate. Its pathway is sulfur metabolism; hydrogen sulfide biosynthesis; sulfite from sulfate: step 3/3. Functionally, catalyzes the formation of sulfite from phosphoadenosine 5'-phosphosulfate (PAPS) using thioredoxin as an electron donor. In Salmonella schwarzengrund (strain CVM19633), this protein is Phosphoadenosine 5'-phosphosulfate reductase.